The following is a 43-amino-acid chain: Lanthionine-containing peptide SapB (43 aa).

The N-terminal stretch at 1–21 is a signal peptide; sequence MALLDLQAMDTPAEDSFGELR. 2 cross-links (lanthionine (Ser-Cys)) span residues 24 to 31 and 34 to 41; these read SQVSLLVC and SSLSVVLC. 2,3-didehydroalanine (Ser) occurs at positions 27 and 37.

It belongs to the lanthionine-containing morphogen protein family. Post-translationally, maturation involves the enzymatic conversion of Ser into dehydrated AA and the formation of thioether bonds with cysteine. This is followed by membrane translocation and cleavage of the modified precursor.

In terms of biological role, lanthionine-containing peptide devoid of antibiotic properties, involved in the formation of aerial mycelium. Suggested to self-assemble at air-water interfaces, thus providing a film of surfactant through which nascent aerial hyphae can emerge. The aerial hyphae differentiate further into spores. The chain is Lanthionine-containing peptide SapB (ramS) from Streptomyces griseus.